The sequence spans 535 residues: EGF domain-specific O-linked N-acetylglucosamine transferase (535 aa).

The signal sequence occupies residues 1–16 (MFILLMFVLLLQEILA). Asn-22 and Asn-271 each carry an N-linked (GlcNAc...) asparagine glycan. The Required for optimal activity signature appears at 303–305 (DYD). Residues Asn-362 and Asn-501 are each glycosylated (N-linked (GlcNAc...) asparagine).

It belongs to the glycosyltransferase 61 family.

It localises to the endoplasmic reticulum lumen. It catalyses the reaction L-seryl-[protein] + UDP-N-acetyl-alpha-D-glucosamine = 3-O-(N-acetyl-beta-D-glucosaminyl)-L-seryl-[protein] + UDP + H(+). The catalysed reaction is L-threonyl-[protein] + UDP-N-acetyl-alpha-D-glucosamine = 3-O-(N-acetyl-beta-D-glucosaminyl)-L-threonyl-[protein] + UDP + H(+). Catalyzes the transfer of a single N-acetylglucosamine from UDP-GlcNAc to a serine or threonine residue in extracellular proteins resulting in their modification with a beta-linked N-acetylglucosamine (O-GlcNAc). Specifically glycosylates the Thr residue located between the fifth and sixth conserved cysteines of folded EGF-like domains. This chain is EGF domain-specific O-linked N-acetylglucosamine transferase (EOGT), found in Gallus gallus (Chicken).